The chain runs to 316 residues: Taste receptor type 2 member 3 (316 aa).

Over 1 to 6 (MMGLTE) the chain is Extracellular. Residues 7–27 (GVFLILSGTQFTLGILVNCFI) form a helical membrane-spanning segment. The Cytoplasmic segment spans residues 28-42 (ELVNGSSWFKTKRMS). The helical transmembrane segment at 43–63 (LSDFIITTLALLRIILLCIIL) threads the bilayer. The Extracellular segment spans residues 64–94 (TDSFLIEFSPNTHDSGIIMQIIDVSWTFTNH). A helical transmembrane segment spans residues 95 to 115 (LSIWLATCLGVLYCLKIASFS). The Cytoplasmic portion of the chain corresponds to 116 to 128 (HPTFLWLKWRVSR). Residues 129 to 149 (VMVWMLLGALLLSCGSTASLI) form a helical membrane-spanning segment. Topologically, residues 150–186 (NEFKLYSVFRGIEATRNVTEHFRKKRSEYYLIHVLGT) are extracellular. The N-linked (GlcNAc...) asparagine glycan is linked to Asn166. Residues 187 to 207 (LWYLPPLIVSLASYSLLIFSL) form a helical membrane-spanning segment. At 208-234 (GRHTRQMLQNGTSSRDPTTEAHKRAIR) the chain is on the cytoplasmic side. Residues 235-255 (IILSFFFLFLLYFLAFLIASF) traverse the membrane as a helical segment. Topologically, residues 256–266 (GNFLPKTKMAK) are extracellular. The helical transmembrane segment at 267 to 287 (MIGEVMTMFYPAGHSFILILG) threads the bilayer. The Cytoplasmic portion of the chain corresponds to 288-316 (NSKLKQTFVVMLRCESGHLKPGSKGPIFS).

Belongs to the G-protein coupled receptor T2R family. As to expression, expressed in subsets of taste receptor cells of the tongue and palate epithelium and exclusively in gustducin-positive cells. Expressed in the antrum and fundus (part of the stomach), duodenum and in gastric endocrine cells.

It is found in the membrane. Functionally, gustducin-coupled receptor implicated in the perception of bitter compounds in the oral cavity and the gastrointestinal tract. Signals through PLCB2 and the calcium-regulated cation channel TRPM5. The polypeptide is Taste receptor type 2 member 3 (TAS2R3) (Homo sapiens (Human)).